Here is a 147-residue protein sequence, read N- to C-terminus: Large ribosomal subunit protein bL9 (147 aa).

Positions 40–60 (TTGNLKQHEAHERKAAEEAKQ) are disordered. Residues 45–59 (KQHEAHERKAAEEAK) are compositionally biased toward basic and acidic residues.

This sequence belongs to the bacterial ribosomal protein bL9 family.

In terms of biological role, binds to the 23S rRNA. In Exiguobacterium sibiricum (strain DSM 17290 / CCUG 55495 / CIP 109462 / JCM 13490 / 255-15), this protein is Large ribosomal subunit protein bL9.